A 257-amino-acid chain; its full sequence is Thioesterase frbE (257 aa).

Belongs to the AMT4 thioesterase family.

It functions in the pathway antifungal biosynthesis. Thioesterase; part of the gene cluster that mediates the biosynthesis of the antifungal antibiotic FR901469, an inhibitor of beta-1,3-glucansynthase, exerting antifungal activity against the pathogenes Candida albicans and Aspergillus fumigatus. FR901469 is a cyclic depsipeptide containing 12 amino acid residues and a fatty acid chain. The NRPS frbI contains 12 modules responsible for the formation of the depsipeptide backbone which is denoted as Acyl-Thr-Ala-Tyr-Val-4OHPro-Thr-Thr-3OHPro-threo3OHGln-Gly-Thr-Orn-OH (C71H116N14O23). The PKS frbB is probably involved in the production of the hydrocarbon chain, and the acyl-CoA ligase frbC might be involved in the transport of the chain to the peptide ptoduct of frbI. Because FR901469 contains 3 hydroxylated amino acid residues, the 3 oxygenases frbA, frbH, and frbJ might be participating in amino acid hydroxylation. As no thioesterase domains were detected in frbI or frbB, the thioesterases frbD and frbE may instead release and cyclize the products of the NRPS and PKS, respectively. The chain is Thioesterase frbE from Dothideomycetidae sp. (strain 11243) (Fungal sp. (strain No.11243)).